The primary structure comprises 332 residues: Adenosine deaminase (332 aa).

Residues H12 and H14 each contribute to the Zn(2+) site. Substrate is bound by residues H14, D16, and G170. Zn(2+) is bound at residue H197. E200 functions as the Proton donor in the catalytic mechanism. A Zn(2+)-binding site is contributed by D278.

It belongs to the metallo-dependent hydrolases superfamily. Adenosine and AMP deaminases family. Adenosine deaminase subfamily. Requires Zn(2+) as cofactor.

It carries out the reaction adenosine + H2O + H(+) = inosine + NH4(+). The enzyme catalyses 2'-deoxyadenosine + H2O + H(+) = 2'-deoxyinosine + NH4(+). Its function is as follows. Catalyzes the hydrolytic deamination of adenosine and 2-deoxyadenosine. The protein is Adenosine deaminase of Clostridium perfringens (strain 13 / Type A).